We begin with the raw amino-acid sequence, 485 residues long: Argininosuccinate lyase (485 aa).

It belongs to the lyase 1 family. Argininosuccinate lyase subfamily.

The protein localises to the cytoplasm. It carries out the reaction 2-(N(omega)-L-arginino)succinate = fumarate + L-arginine. Its pathway is amino-acid biosynthesis; L-arginine biosynthesis; L-arginine from L-ornithine and carbamoyl phosphate: step 3/3. This Nitrosopumilus maritimus (strain SCM1) protein is Argininosuccinate lyase.